Consider the following 272-residue polypeptide: Universal stress protein MT2699 (272 aa).

ATP contacts are provided by residues Gly-15, Gly-109–Arg-115, and Ser-123–Thr-124.

Belongs to the universal stress protein A family.

The chain is Universal stress protein MT2699 from Mycobacterium tuberculosis (strain CDC 1551 / Oshkosh).